A 331-amino-acid chain; its full sequence is Adenosine deaminase (331 aa).

Positions 12 and 14 each coordinate Zn(2+). Positions 14, 16, and 170 each coordinate substrate. Residue histidine 197 participates in Zn(2+) binding. Glutamate 200 (proton donor) is an active-site residue. Aspartate 278 provides a ligand contact to Zn(2+).

The protein belongs to the metallo-dependent hydrolases superfamily. Adenosine and AMP deaminases family. Adenosine deaminase subfamily. Zn(2+) serves as cofactor.

It catalyses the reaction adenosine + H2O + H(+) = inosine + NH4(+). It carries out the reaction 2'-deoxyadenosine + H2O + H(+) = 2'-deoxyinosine + NH4(+). Functionally, catalyzes the hydrolytic deamination of adenosine and 2-deoxyadenosine. This Vibrio vulnificus (strain YJ016) protein is Adenosine deaminase.